A 339-amino-acid polypeptide reads, in one-letter code: DNA-directed RNA polymerase subunit alpha (339 aa).

The interval 1-235 (MTIQKNWQEL…DQLNVFVNFE (235 aa)) is alpha N-terminal domain (alpha-NTD). The interval 251 to 339 (FNPAFLKKVD…ELAKRFEDHY (89 aa)) is alpha C-terminal domain (alpha-CTD).

The protein belongs to the RNA polymerase alpha chain family. Homodimer. The RNAP catalytic core consists of 2 alpha, 1 beta, 1 beta' and 1 omega subunit. When a sigma factor is associated with the core the holoenzyme is formed, which can initiate transcription.

It catalyses the reaction RNA(n) + a ribonucleoside 5'-triphosphate = RNA(n+1) + diphosphate. Its function is as follows. DNA-dependent RNA polymerase catalyzes the transcription of DNA into RNA using the four ribonucleoside triphosphates as substrates. The protein is DNA-directed RNA polymerase subunit alpha of Rhodopseudomonas palustris (strain BisB18).